The primary structure comprises 273 residues: Formamidopyrimidine-DNA glycosylase (273 aa).

Proline 2 serves as the catalytic Schiff-base intermediate with DNA. Glutamate 3 acts as the Proton donor in catalysis. Catalysis depends on lysine 58, which acts as the Proton donor; for beta-elimination activity. Residues histidine 91 and arginine 110 each coordinate DNA. Residues 238–272 (QVYGKTGQPCPRCASMIVKIKLGGRGTHLCPHCQK) form an FPG-type zinc finger. Arginine 262 (proton donor; for delta-elimination activity) is an active-site residue.

The protein belongs to the FPG family. In terms of assembly, monomer. The cofactor is Zn(2+).

It catalyses the reaction Hydrolysis of DNA containing ring-opened 7-methylguanine residues, releasing 2,6-diamino-4-hydroxy-5-(N-methyl)formamidopyrimidine.. The enzyme catalyses 2'-deoxyribonucleotide-(2'-deoxyribose 5'-phosphate)-2'-deoxyribonucleotide-DNA = a 3'-end 2'-deoxyribonucleotide-(2,3-dehydro-2,3-deoxyribose 5'-phosphate)-DNA + a 5'-end 5'-phospho-2'-deoxyribonucleoside-DNA + H(+). Involved in base excision repair of DNA damaged by oxidation or by mutagenic agents. Acts as a DNA glycosylase that recognizes and removes damaged bases. Has a preference for oxidized purines, such as 7,8-dihydro-8-oxoguanine (8-oxoG). Has AP (apurinic/apyrimidinic) lyase activity and introduces nicks in the DNA strand. Cleaves the DNA backbone by beta-delta elimination to generate a single-strand break at the site of the removed base with both 3'- and 5'-phosphates. The chain is Formamidopyrimidine-DNA glycosylase from Streptococcus thermophilus (strain ATCC BAA-250 / LMG 18311).